The sequence spans 702 residues: Mesothelin-like protein (702 aa).

The first 35 residues, 1-35 (MAAAVTIPGPRIGALQSSGLTLLLSLAAHCSGPQA), serve as a signal peptide directing secretion. The Extracellular segment spans residues 36–638 (KVLSPGGLDA…AQASTSGSLW (603 aa)). N122, N307, and N424 each carry an N-linked (GlcNAc...) asparagine glycan. Residues 588 to 611 (QLGLDASPTSPTGPAHGTRGPPST) form a disordered region. A helical transmembrane segment spans residues 639–668 (APLGYLPLAMALPCSLLCLLHWGTCILVSV). Topologically, residues 669–702 (DSVASGWLGSQGSGAGKTEVLDSAGRPLGLTGQL) are cytoplasmic.

This sequence belongs to the mesothelin family.

It is found in the membrane. Functionally, may play a role in cellular adhesion. The sequence is that of Mesothelin-like protein (MSLNL) from Homo sapiens (Human).